A 591-amino-acid polypeptide reads, in one-letter code: Aspartate--tRNA(Asp/Asn) ligase (591 aa).

Glu-170 serves as a coordination point for L-aspartate. Residues 194–197 are aspartate; sequence QLFK. L-aspartate is bound at residue Arg-216. Residues 216-218 and Gln-225 each bind ATP; that span reads RDE. His-448 lines the L-aspartate pocket. Glu-482 provides a ligand contact to ATP. Arg-489 provides a ligand contact to L-aspartate. Residue 534–537 coordinates ATP; that stretch reads GWDR. The disordered stretch occupies residues 559–591; the sequence is GGVDPLTDAPAPITEQQRKESGIDVKPEPSKPH. Over residues 574-591 the composition is skewed to basic and acidic residues; sequence QQRKESGIDVKPEPSKPH.

The protein belongs to the class-II aminoacyl-tRNA synthetase family. Type 1 subfamily. As to quaternary structure, homodimer.

The protein resides in the cytoplasm. The enzyme catalyses tRNA(Asx) + L-aspartate + ATP = L-aspartyl-tRNA(Asx) + AMP + diphosphate. In terms of biological role, aspartyl-tRNA synthetase with relaxed tRNA specificity since it is able to aspartylate not only its cognate tRNA(Asp) but also tRNA(Asn). Reaction proceeds in two steps: L-aspartate is first activated by ATP to form Asp-AMP and then transferred to the acceptor end of tRNA(Asp/Asn). In Mycobacterium avium (strain 104), this protein is Aspartate--tRNA(Asp/Asn) ligase.